The primary structure comprises 198 residues: Probable molybdenum cofactor guanylyltransferase (198 aa).

Residues 9 to 11 (LAG), Lys22, Asp66, and Asp95 contribute to the GTP site. Asp95 serves as a coordination point for Mg(2+).

It belongs to the MobA family. The cofactor is Mg(2+).

It localises to the cytoplasm. It carries out the reaction Mo-molybdopterin + GTP + H(+) = Mo-molybdopterin guanine dinucleotide + diphosphate. Its function is as follows. Transfers a GMP moiety from GTP to Mo-molybdopterin (Mo-MPT) cofactor (Moco or molybdenum cofactor) to form Mo-molybdopterin guanine dinucleotide (Mo-MGD) cofactor. This Clostridium perfringens (strain ATCC 13124 / DSM 756 / JCM 1290 / NCIMB 6125 / NCTC 8237 / Type A) protein is Probable molybdenum cofactor guanylyltransferase.